The chain runs to 263 residues: Methylesterase 4 (263 aa).

The Acyl-ester intermediate role is filled by Ser84. Catalysis depends on charge relay system residues Asp213 and His241.

Belongs to the AB hydrolase superfamily. Methylesterase family.

It carries out the reaction methyl salicylate + H2O = salicylate + methanol + H(+). The protein operates within plant hormone biosynthesis. Esterase activity is down-regulated by salicylic acid (SA). Functionally, methylesterase shown to have carboxylesterase activity and methyl salicylate (MeSA) esterase activity in vitro. The polypeptide is Methylesterase 4 (Arabidopsis thaliana (Mouse-ear cress)).